The chain runs to 254 residues: MLAKRILPCLDVNKGRVVKGVNFVNLQDAGDPVELARLYNQAGADELVFLDITATHEDRDTIIDVVYRTAEQVFIPLTVGGGIQSLENIKNLLRAGADKVSINSAAVREPELLDRASDRFGKQCIVVAIDARRRKDEHNPGWEVYVRGGRKNTGIDALLWAQEVEKRGAGELLVTSMDADGTQAGYDLALTKAIAERVEIPVIASGGAGNCQHIYEALTEGRAEAALLASLLHYGQLTIAEVKNYLQNQQVPVR.

Active-site residues include Asp11 and Asp130.

This sequence belongs to the HisA/HisF family. In terms of assembly, heterodimer of HisH and HisF.

The protein localises to the cytoplasm. It carries out the reaction 5-[(5-phospho-1-deoxy-D-ribulos-1-ylimino)methylamino]-1-(5-phospho-beta-D-ribosyl)imidazole-4-carboxamide + L-glutamine = D-erythro-1-(imidazol-4-yl)glycerol 3-phosphate + 5-amino-1-(5-phospho-beta-D-ribosyl)imidazole-4-carboxamide + L-glutamate + H(+). The protein operates within amino-acid biosynthesis; L-histidine biosynthesis; L-histidine from 5-phospho-alpha-D-ribose 1-diphosphate: step 5/9. Functionally, IGPS catalyzes the conversion of PRFAR and glutamine to IGP, AICAR and glutamate. The HisF subunit catalyzes the cyclization activity that produces IGP and AICAR from PRFAR using the ammonia provided by the HisH subunit. In Microcystis aeruginosa (strain NIES-843 / IAM M-2473), this protein is Imidazole glycerol phosphate synthase subunit HisF.